The primary structure comprises 150 residues: Large ribosomal subunit protein uL15 (150 aa).

A disordered region spans residues Ala-12–Gly-43. Positions Thr-30–Lys-39 are enriched in basic residues.

This sequence belongs to the universal ribosomal protein uL15 family. Part of the 50S ribosomal subunit.

In terms of biological role, binds to the 23S rRNA. The polypeptide is Large ribosomal subunit protein uL15 (Methylacidiphilum infernorum (isolate V4) (Methylokorus infernorum (strain V4))).